The following is a 132-amino-acid chain: ATP synthase epsilon chain (132 aa).

A compositionally biased stretch (basic and acidic residues) spans 88 to 102 (IDKERAEAARQRAQE). Positions 88 to 112 (IDKERAEAARQRAQERLNSQSDDTD) are disordered.

The protein belongs to the ATPase epsilon chain family. As to quaternary structure, F-type ATPases have 2 components, CF(1) - the catalytic core - and CF(0) - the membrane proton channel. CF(1) has five subunits: alpha(3), beta(3), gamma(1), delta(1), epsilon(1). CF(0) has three main subunits: a, b and c. The F(1)F(0) complex interacts with SpoIIIJ and YqjG; YqgA is found in the same complex.

It localises to the cell membrane. Produces ATP from ADP in the presence of a proton gradient across the membrane. The protein is ATP synthase epsilon chain (atpC) of Bacillus subtilis (strain 168).